The chain runs to 105 residues: Thioredoxin (105 aa).

Residues 2–105 form the Thioredoxin domain; that stretch reads VKQIESKYAF…KLEATINELI (104 aa). Lys3 is subject to N6-acetyllysine. N6-succinyllysine is present on Lys8. Residues Cys32 and Cys35 each act as nucleophile in the active site. A disulfide bridge links Cys32 with Cys35. Residue Lys39 is modified to N6-acetyllysine. Cys62 and Cys69 each carry S-nitrosocysteine. Cys73 carries the post-translational modification S-nitrosocysteine; alternate. Residue Lys94 is modified to N6-acetyllysine; alternate. Lys94 carries the N6-succinyllysine; alternate modification.

The protein belongs to the thioredoxin family. In terms of assembly, homodimer; disulfide-linked. Interacts with TXNIP through the redox-active site. Interacts with MAP3K5 and CASP3. Interacts with APEX1; the interaction stimulates the FOS/JUN AP-1 DNA-binding activity in a redox-dependent manner. In terms of processing, in the fully reduced protein, both Cys-69 and Cys-73 are nitrosylated in response to nitric oxide (NO). When two disulfide bonds are present in the protein, only Cys-73 is nitrosylated. Cys-73 can serve as donor for nitrosylation of target proteins.

It localises to the nucleus. The protein localises to the cytoplasm. The protein resides in the secreted. Functionally, participates in various redox reactions through the reversible oxidation of its active center dithiol to a disulfide and catalyzes dithiol-disulfide exchange reactions. Plays a role in the reversible S-nitrosylation of cysteine residues in target proteins, and thereby contributes to the response to intracellular nitric oxide. Nitrosylates the active site Cys of CASP3 in response to nitric oxide (NO), and thereby inhibits caspase-3 activity. Induces the FOS/JUN AP-1 DNA binding activity in ionizing radiation (IR) cells through its oxidation/reduction status and stimulates AP-1 transcriptional activity. This chain is Thioredoxin (TXN), found in Bos taurus (Bovine).